Consider the following 1503-residue polypeptide: E3 ubiquitin-protein ligase listerin (1503 aa).

HEAT repeat units follow at residues 52-89 (SGIDDETRIVMRKLTKKDCQTREKGLRELTNIIAETSS), 93-129 (CYEHFCGLVPQLSTDGSPTVRLLTMKTITLFLVKLEK), 133-170 (KGLKKIIPMVLFARCDVTNGVAAAAGAVIRDGFEADKK), 280-318 (LNTPSIVTYIQNHLDSQTFTPECSTAWEGMIILLPSAQF), 323-345 (SLQNGIYPRFLNVIRKKGNHWRV), 346-384 (LQHFLLPAVVLLLKEMGSLENNMKVLGTIMESFTDNLPW), 552-589 (GDIVRLIKLLLENQEIKSLNISVKNDHVGRRLLLTGGS), 640-663 (AENVEFLITLLRKMKSTDVSNEAE), 664-700 (KNVLILKLFTAIFESDEDAKSEHYNCLSEHLTSDFNS), 845-882 (LEKRYSLVALTEELQRSRREIEERLIRSDEVRFKLDDS), 1022-1065 (TLFI…RMFR), 1078-1117 (RTLLKAMFTLVEFPTNVPNDSVVTREFVPELSVFKYSLLE), 1141-1183 (AAAK…VMIS), and 1302-1340 (FKSITLLPAAVRLFHKNIPNNFKPIFQEVVTKHASKLLI). The RING-type zinc-finger motif lies at 1446 to 1499 (CTICMMTVHQQTNQLPKVKCKQCKNRFHSNCLVSSFHTYKWFESSNQSTCPLCR).

The protein belongs to the LTN1 family. Component of the ribosome quality control complex (RQC), composed of at least the E3 ubiquitin ligase ltn1 and nemf. The complex probably also contains tcf25 as well as vcp/p97 and its ubiquitin-binding cofactors. RQC forms a stable complex with 60S ribosomal subunits.

The protein localises to the cytoplasm. It is found in the cytosol. The enzyme catalyses S-ubiquitinyl-[E2 ubiquitin-conjugating enzyme]-L-cysteine + [acceptor protein]-L-lysine = [E2 ubiquitin-conjugating enzyme]-L-cysteine + N(6)-ubiquitinyl-[acceptor protein]-L-lysine.. The protein operates within protein modification; protein ubiquitination. Its function is as follows. E3 ubiquitin-protein ligase. Component of the ribosome quality control complex (RQC), a ribosome-associated complex that mediates ubiquitination and extraction of incompletely synthesized nascent chains for proteasomal degradation. Ubiquitination leads to vcp/p97 recruitment for extraction and degradation of the incomplete translation product. This chain is E3 ubiquitin-protein ligase listerin, found in Caenorhabditis briggsae.